We begin with the raw amino-acid sequence, 287 residues long: MAAEARVSRWYFGGLASCGAACCTHPLDLLKVHLQTQQEVKLRMTGMALRVVRTDGILALYSGLSASLCRQMTYSLTRFAIYETVRDRVAKGSQGPLPFHEKVLLGSVSGLAGGFVGTPADLVNVRMQNDVKLPQGQRRNYAHALDGLYRVAREEGLRRLFSGATMASSRGALVTVGQLSCYDQAKQLVLSTGYLSDNIFTHFVASFIAGGCATFLCQPLDVLKTRLMNSKGEYQGVFHCAVETAKLGPLAFYKGLVPAGIRLIPHTVLTFVFLEQLRKNFGIKVPS.

Solcar repeat units lie at residues 8 to 88, 101 to 188, and 197 to 280; these read SRWY…VRDR, EKVL…AKQL, and DNIF…LRKN. Helical transmembrane passes span 10–30, 63–82, 103–123, 163–182, 203–223, and 255–275; these read WYFG…LDLL, GLSA…FAIY, VLLG…ADLV, GATM…LSCY, FVAS…LDVL, and GLVP…VFLE.

The protein belongs to the mitochondrial carrier (TC 2.A.29) family. In terms of tissue distribution, present in high amounts in liver and kidney, and at lower levels in all the other tissues analyzed.

Its subcellular location is the mitochondrion inner membrane. It carries out the reaction (S)-malate(in) + phosphate(out) = (S)-malate(out) + phosphate(in). The enzyme catalyses malonate(out) + (S)-malate(in) = malonate(in) + (S)-malate(out). The catalysed reaction is (S)-malate(in) + succinate(out) = (S)-malate(out) + succinate(in). It catalyses the reaction (S)-malate(in) + sulfate(out) = (S)-malate(out) + sulfate(in). It carries out the reaction malonate(out) + phosphate(in) = malonate(in) + phosphate(out). The enzyme catalyses succinate(out) + phosphate(in) = succinate(in) + phosphate(out). The catalysed reaction is sulfate(out) + phosphate(in) = sulfate(in) + phosphate(out). It catalyses the reaction malonate(out) + succinate(in) = malonate(in) + succinate(out). Functionally, catalyzes the electroneutral exchange or flux of physiologically important metabolites such as dicarboxylates (malonate, malate, succinate), inorganic sulfur-containing anions, and phosphate, across mitochondrial inner membrane. Plays an important role in gluconeogenesis, fatty acid metabolism, urea synthesis, and sulfur metabolism, particularly in liver, by supplying the substrates for the different metabolic processes. Regulates fatty acid release from adipocytes, and contributes to systemic insulin sensitivity. The protein is Mitochondrial dicarboxylate carrier (SLC25A10) of Homo sapiens (Human).